The primary structure comprises 77 residues: Putative defensin-like protein 187 (77 aa).

Residues 1-19 (MKNSSIMFVLIVVFLISSS) form the signal peptide. 3 disulfides stabilise this stretch: cysteine 31–cysteine 77, cysteine 43–cysteine 71, and cysteine 47–cysteine 73.

This sequence belongs to the DEFL family.

The protein resides in the secreted. This is Putative defensin-like protein 187 (LCR42) from Arabidopsis thaliana (Mouse-ear cress).